The chain runs to 206 residues: Guanylate kinase (206 aa).

Residues 7–185 enclose the Guanylate kinase-like domain; that stretch reads GIVLVLCAPS…AYDELRAAYL (179 aa). ATP is bound at residue 14 to 21; sequence APSGTGKT.

This sequence belongs to the guanylate kinase family.

It localises to the cytoplasm. The enzyme catalyses GMP + ATP = GDP + ADP. In terms of biological role, essential for recycling GMP and indirectly, cGMP. The polypeptide is Guanylate kinase (Oleidesulfovibrio alaskensis (strain ATCC BAA-1058 / DSM 17464 / G20) (Desulfovibrio alaskensis)).